Reading from the N-terminus, the 314-residue chain is Protein nutcracker (314 aa).

The tract at residues 1 to 62 (MSDTKSEIEG…PRLIQEKSTQ (62 aa)) is disordered. Residues 21 to 34 (QQQQQPQQQQNEQQ) are compositionally biased toward low complexity. The interval 257 to 314 (MQMEMKLQPSLLGLPDELYFEIFRYLDKSQLNVVARVNRHLHFYSKEVERKRLKGGRS) is required for interaction with skpA and Cul1, but not with PI31. Residues 264 to 309 (QPSLLGLPDELYFEIFRYLDKSQLNVVARVNRHLHFYSKEVERKRL) enclose the F-box domain.

In terms of assembly, component of an SCF (SKP1-CUL1-F-box protein) E3 ubiquitin-protein ligase complex, at least composed of ntc, skpA and Cul1. Interacts (via F-box domain) with skpA and Cul1. Interacts with Prosalpha7 and PI31. Interacts with Bruce. As to expression, expressed in testis (at protein level).

The protein localises to the cytoplasm. Functions together with PI31 to control non-apoptotic caspase activation during sperm individualization. Positively regulates PI31 stability. This is Protein nutcracker from Drosophila melanogaster (Fruit fly).